A 160-amino-acid chain; its full sequence is Transcription elongation factor GreA (160 aa).

Positions 1-72 form a coiled coil; it reads MAEKTYPMTL…QISSLETKIR (72 aa).

This sequence belongs to the GreA/GreB family.

Its function is as follows. Necessary for efficient RNA polymerase transcription elongation past template-encoded arresting sites. The arresting sites in DNA have the property of trapping a certain fraction of elongating RNA polymerases that pass through, resulting in locked ternary complexes. Cleavage of the nascent transcript by cleavage factors such as GreA or GreB allows the resumption of elongation from the new 3'terminus. GreA releases sequences of 2 to 3 nucleotides. The polypeptide is Transcription elongation factor GreA (Streptococcus pneumoniae serotype 4 (strain ATCC BAA-334 / TIGR4)).